A 307-amino-acid chain; its full sequence is Pantothenate kinase (307 aa).

90-97 (GSVAVGKS) contributes to the ATP binding site.

It belongs to the prokaryotic pantothenate kinase family.

The protein localises to the cytoplasm. It catalyses the reaction (R)-pantothenate + ATP = (R)-4'-phosphopantothenate + ADP + H(+). The protein operates within cofactor biosynthesis; coenzyme A biosynthesis; CoA from (R)-pantothenate: step 1/5. The chain is Pantothenate kinase from Limosilactobacillus fermentum (strain NBRC 3956 / LMG 18251) (Lactobacillus fermentum).